Consider the following 503-residue polypeptide: Glycerol kinase (503 aa).

Threonine 12 contributes to the ADP binding site. ATP-binding residues include threonine 12, threonine 13, and serine 14. Threonine 12 is a sn-glycerol 3-phosphate binding site. Arginine 16 contributes to the ADP binding site. The sn-glycerol 3-phosphate site is built by arginine 82, glutamate 83, tyrosine 134, and aspartate 243. Arginine 82, glutamate 83, tyrosine 134, aspartate 243, and glutamine 244 together coordinate glycerol. Positions 265 and 308 each coordinate ADP. Threonine 265, glycine 308, glutamine 312, and glycine 412 together coordinate ATP. Glycine 412 is an ADP binding site.

This sequence belongs to the FGGY kinase family.

The enzyme catalyses glycerol + ATP = sn-glycerol 3-phosphate + ADP + H(+). It functions in the pathway polyol metabolism; glycerol degradation via glycerol kinase pathway; sn-glycerol 3-phosphate from glycerol: step 1/1. With respect to regulation, inhibited by fructose 1,6-bisphosphate (FBP). In terms of biological role, key enzyme in the regulation of glycerol uptake and metabolism. Catalyzes the phosphorylation of glycerol to yield sn-glycerol 3-phosphate. The protein is Glycerol kinase of Nitrobacter hamburgensis (strain DSM 10229 / NCIMB 13809 / X14).